The sequence spans 468 residues: Citrate synthase, mitochondrial (468 aa).

Residues 1 to 30 (MSLITAGRLCARILGAKNSPCALIAARQAS) constitute a mitochondrion transit peptide. Catalysis depends on residues His303 and His349. Residue Arg358 participates in oxaloacetate binding. Asp404 is an active-site residue. Oxaloacetate contacts are provided by Arg430 and Arg450.

It belongs to the citrate synthase family. Homodimer.

It localises to the mitochondrion matrix. It catalyses the reaction oxaloacetate + acetyl-CoA + H2O = citrate + CoA + H(+). The protein operates within carbohydrate metabolism; tricarboxylic acid cycle; isocitrate from oxaloacetate: step 1/2. Its function is as follows. Key enzyme of the Krebs tricarboxylic acid cycle which catalyzes the synthesis of citrate from acetyl coenzyme A and oxaloacetate. The protein is Citrate synthase, mitochondrial (cs) of Xenopus tropicalis (Western clawed frog).